A 728-amino-acid polypeptide reads, in one-letter code: Plakophilin-1 (728 aa).

The segment at 1 to 235 (MNHSPLKTAL…SFGHSRASSK (235 aa)) is required for binding to single stranded DNA. Positions 1-287 (MNHSPLKTAL…ESAKQQVYQL (287 aa)) are required for interaction with EIF4A1. The residue at position 4 (Ser-4) is a Phosphoserine; by RIPK4. Positions 48-69 (TVKRQKSKSSQSSTLSHSNRGS) are disordered. Phosphorylation in this region is required for cytoplasmic localization and protein stabilization regions lie at residues 54 to 69 (SKSS…NRGS) and 117 to 192 (RFSS…STCS). A Phosphoserine modification is found at Ser-119. Ser-120 is modified (phosphoserine; by RIPK4). Position 122 is a phosphoserine (Ser-122). Ser-143 is modified (phosphoserine; by RIPK4). A required for WNT-mediated nuclear localization region spans residues 161–270 (YCDPRGTLRK…KYQAIGAYYI (110 aa)). ARM repeat units lie at residues 244–275 (SGLT…HTCF), 276–317 (QDES…NLVF), 318–360 (RSTP…NLSS), 361–412 (TDEL…GCLR), 413–443 (NLSS…NCVA), 505–536 (NYDC…LNLM), 537–583 (GKSK…IARL), 584–629 (LQSG…SHTG), and 630–694 (NTSN…DMWA).

It belongs to the beta-catenin family. In terms of assembly, part of a complex that contains DSG3, PKP1, YAP1 and YWHAG; the complex is required for localization of DSG3 and YAP1 to the cell membrane in keratinocytes. Interacts (via N-terminus) with KRT5/CK5, KRT8/CK8 (via rod domain), KRT15/CK15 and KRT18/CK18 (via rod domain) as part of intermediate filaments. Interacts with VIM (via rod domain). Interacts with DSP. Interacts with DES. Interacts with FXR1; the interaction may facilitate the binding of PKP1 to PKP2, PKP3 and DSP mRNA. Interacts (via N-terminus) with EIF4A1; the interaction promotes EIF4A1 recruitment to the cap-dependent translation complex and EIF4A1 ATPase activity. Interacts with TJP1/ZO-1; the interaction facilitates TJP1/ZO-1 localization to the plasma membrane. Interacts (when phosphorylated) with YWHAG; the interaction results in translocation of PKP1 to the cytoplasm and loss of intercellular adhesion in keratinocytes. Phosphorylated by AKT2; required for interaction with YWHAG and subsequent localization away from desmosomes to the cytoplasm. Phosphorylation of Ser-119 by AKT2 promotes PKP1-driven cap-dependent mRNA translation and decreases intercellular adhesion, phosphorylation is promoted by insulin. Phosphorylation by RIPK4 at the N-terminus is required for its role in differentiation of keratinocytes and DSG1 localization at cell junctions. As to expression, expressed in undifferentiated keratinocytes of the epidermis at birth, expression increases as differentiation proceeds (at protein level). Expressed in the cervical loop during early tooth differentiation, expression is then present between ameloblasts, at ameloblast-ameloblast junctions and in the stratum intermedium during pre-secretory and secretory stages of tooth development (at protein level).

The protein resides in the nucleus. Its subcellular location is the cytoplasm. It is found in the perinuclear region. The protein localises to the cell junction. It localises to the desmosome. The protein resides in the cell membrane. Its subcellular location is the stress granule. Functionally, a component of desmosome cell-cell junctions which are required for positive regulation of cellular adhesion. Plays a role in desmosome protein expression regulation and localization to the desmosomal plaque, thereby maintaining cell sheet integrity and anchorage of desmosomes to intermediate filaments. Required for localization of DSG3 and YAP1 to the cell membrane in keratinocytes in response to mechanical strain, via the formation of an interaction complex composed of DSG3, YAP1, PKP1 and YWHAG. Positively regulates differentiation of keratinocytes, potentially via promoting localization of DSG1 at desmosome cell junctions. Required for calcium-independent development and maturation of desmosome plaques specifically at lateral cell-cell contacts in differentiating keratinocytes. Plays a role in the maintenance of DSG3 protein abundance, DSG3 clustering and localization of these clusters to the cell membrane in keratinocytes. May also promote keratinocyte proliferation and morphogenesis during postnatal development. Required for tight junction inside-out transepidermal barrier function of the skin, and is thereby involved in neonatal survival possibly via maintenance of hydration levels. Promotes Wnt-mediated proliferation and differentiation of ameloblasts, via facilitating TJP1/ZO-1 localization to tight junctions. Binds single-stranded DNA (ssDNA), and may thereby play a role in sensing DNA damage and promoting cell survival. Positively regulates cap-dependent translation and as a result cell proliferation, via recruitment of EIF4A1 to the initiation complex and promotion of EIF4A1 ATPase activity. Regulates the mRNA stability and protein abundance of desmosome components PKP2, PKP3, DSC2 and DSP, potentially via its interaction with FXR1. The chain is Plakophilin-1 (Pkp1) from Mus musculus (Mouse).